The primary structure comprises 385 residues: Pectate lyase E (385 aa).

An N-terminal signal peptide occupies residues 1–30; that stretch reads MKNTRVRSIGTKSLLAAVVTAALMATSAYA. Residue D164 participates in Ca(2+) binding. Repeat unit 1 spans residues 177–182; it reads DHVTIS. Positions 177 to 218 are 2 X 6 AA approximate repeats; that stretch reads DHVTISDGSFTDDKYTTKDGEKYVQHDGALDIKKGSDYVTIS. A Ca(2+)-binding site is contributed by D207. Repeat 2 spans residues 213–218; sequence DYVTIS. R260 is a catalytic residue.

It belongs to the polysaccharide lyase 1 family. PLBC subfamily. Ca(2+) is required as a cofactor.

Its subcellular location is the secreted. The catalysed reaction is Eliminative cleavage of (1-&gt;4)-alpha-D-galacturonan to give oligosaccharides with 4-deoxy-alpha-D-galact-4-enuronosyl groups at their non-reducing ends.. The protein operates within glycan metabolism; pectin degradation; 2-dehydro-3-deoxy-D-gluconate from pectin: step 2/5. Its function is as follows. Involved in maceration and soft-rotting of plant tissue. The polypeptide is Pectate lyase E (pelE) (Dickeya chrysanthemi (Pectobacterium chrysanthemi)).